The following is a 101-amino-acid chain: NADH-quinone oxidoreductase subunit K (101 aa).

The next 3 membrane-spanning stretches (helical) occupy residues 4–24 (LSHYLVLGALLFAIGVVGIFL), 30–50 (IILLMSIELMLLAVNMNFVAF), and 61–81 (IFVFFILTVAAAEAAIGLAIL).

This sequence belongs to the complex I subunit 4L family. As to quaternary structure, NDH-1 is composed of 14 different subunits. Subunits NuoA, H, J, K, L, M, N constitute the membrane sector of the complex.

Its subcellular location is the cell inner membrane. It catalyses the reaction a quinone + NADH + 5 H(+)(in) = a quinol + NAD(+) + 4 H(+)(out). Functionally, NDH-1 shuttles electrons from NADH, via FMN and iron-sulfur (Fe-S) centers, to quinones in the respiratory chain. The immediate electron acceptor for the enzyme in this species is believed to be ubiquinone. Couples the redox reaction to proton translocation (for every two electrons transferred, four hydrogen ions are translocated across the cytoplasmic membrane), and thus conserves the redox energy in a proton gradient. The polypeptide is NADH-quinone oxidoreductase subunit K (Nitrosomonas europaea (strain ATCC 19718 / CIP 103999 / KCTC 2705 / NBRC 14298)).